Consider the following 148-residue polypeptide: Ribosome-binding factor A (148 aa).

The interval 120-148 is disordered; sequence AKAREGASYAGDADPYRTAEPDADDAPRA. Residues 133 to 148 are compositionally biased toward basic and acidic residues; the sequence is DPYRTAEPDADDAPRA.

The protein belongs to the RbfA family. In terms of assembly, monomer. Binds 30S ribosomal subunits, but not 50S ribosomal subunits or 70S ribosomes.

The protein resides in the cytoplasm. One of several proteins that assist in the late maturation steps of the functional core of the 30S ribosomal subunit. Associates with free 30S ribosomal subunits (but not with 30S subunits that are part of 70S ribosomes or polysomes). Required for efficient processing of 16S rRNA. May interact with the 5'-terminal helix region of 16S rRNA. The polypeptide is Ribosome-binding factor A (Micrococcus luteus (strain ATCC 4698 / DSM 20030 / JCM 1464 / CCM 169 / CCUG 5858 / IAM 1056 / NBRC 3333 / NCIMB 9278 / NCTC 2665 / VKM Ac-2230) (Micrococcus lysodeikticus)).